A 925-amino-acid chain; its full sequence is Protein PDC2 (925 aa).

The 76-residue stretch at 63–138 (DANRLRKPNN…LSKMDVNISV (76 aa)) folds into the HTH CENPB-type domain. Disordered regions lie at residues 510–596 (DNNQ…RNSS), 674–693 (NEKAASDQNKSTDELPSSTA), and 904–925 (PTGGSNLPDSNNLHLPGNTGFF). Residues 513 to 537 (QNHLSMSQASHNPDYNSNHSNNAIE) show a composition bias toward polar residues. Residues 538–563 (NTNNRGSNNNNNNNGSSNNINDNDSS) show a composition bias toward low complexity. A compositionally biased stretch (polar residues) spans 565-596 (KYLQQNTVDNSTKTGNPGQPNISSMESQRNSS). Residues 674–686 (NEKAASDQNKSTD) show a composition bias toward basic and acidic residues. Polar residues predominate over residues 904–916 (PTGGSNLPDSNNL).

Functionally, essential for the synthesis of pyruvate decarboxylase. May be important for a high basal level of PDC gene expression or play a positive role in the autoregulation control of PDC1 and PDC5. This is Protein PDC2 (PDC2) from Saccharomyces cerevisiae (strain ATCC 204508 / S288c) (Baker's yeast).